The chain runs to 260 residues: Snake venom serine protease pallabin-2 (260 aa).

The N-terminal stretch at 1–18 (MVLIKVLANLLILQLSYA) is a signal peptide. Residues 19–24 (QKSSEL) constitute a propeptide that is removed on maturation. The Peptidase S1 domain occupies 25–251 (IIGGDECNIN…HLDWIENIIA (227 aa)). 6 cysteine pairs are disulfide-bonded: cysteine 31/cysteine 163, cysteine 50/cysteine 66, cysteine 98/cysteine 258, cysteine 142/cysteine 212, cysteine 174/cysteine 191, and cysteine 202/cysteine 227. Histidine 65 acts as the Charge relay system in catalysis. Asparagine 103 is a glycosylation site (N-linked (GlcNAc...) asparagine). The Charge relay system role is filled by aspartate 110. Catalysis depends on serine 206, which acts as the Charge relay system.

It belongs to the peptidase S1 family. Snake venom subfamily. Monomer. As to expression, expressed by the venom gland.

Its subcellular location is the secreted. Snake venom serine protease that may act in the hemostasis system of the prey. The sequence is that of Snake venom serine protease pallabin-2 (JZTHR7) from Gloydius halys (Chinese water mocassin).